The chain runs to 431 residues: Nuclear envelope integral membrane protein 1 (431 aa).

An N-terminal signal peptide occupies residues 1-29; that stretch reads MAGEVEGEGCRVSWGVLVALLLLPLPSLC. Helical transmembrane passes span 151-171, 175-195, 206-226, 236-256, and 266-286; these read PRLF…DTLS, IFYY…ILVF, PFVA…QLVF, YWQY…AFCY, and SINI…YISV. An a; required for its colocalization with lamins at the nuclear envelope region spans residues 176–287; sequence FYYSTGITVG…GLLLMYISVQ (112 aa). Positions 317 to 325 match the Nuclear localization signal motif; sequence RKIKLKRGK. Residues 326–395 form a b; required for interaction with ran region; sequence PSPPRLLTEE…LTPNEVSVHE (70 aa). An interaction with banf1-a and banf1-b region spans residues 326-431; sequence PSPPRLLTEE…IEPVLYQDLR (106 aa). The interval 368–375 is BAF-binding site (BBS); essential for interaction with banf1-a, banf1-b and ran; that stretch reads SRIQSPKR.

It belongs to the NEMP family. Homooligomer. Interacts with banf1-a and banf1-b. Interacts with ran-gtp. In terms of processing, phosphorylated.

It is found in the nucleus inner membrane. The protein localises to the nucleus envelope. Functionally, in concert with ran, required for proper eye development. May be involved in the expression of early eye marker genes. Contributes to nuclear envelope stiffness in germ cells. Required for fertility. Essential for normal erythropoiesis. Required for efficient nuclear envelope opening and enucleation during the late stages of erythroblast maturation. This Xenopus tropicalis (Western clawed frog) protein is Nuclear envelope integral membrane protein 1 (nemp1).